The following is a 339-amino-acid chain: Trace amine-associated receptor 1 (339 aa).

Residues 1 to 25 lie on the Extracellular side of the membrane; the sequence is MMPFCHNIINISCVKNNWSNDVRAS. 3 disulfides stabilise this stretch: C5–C178, C13–C88, and C96–C182. N-linked (GlcNAc...) asparagine glycans are attached at residues N10 and N17. Residues 26 to 46 form a helical membrane-spanning segment; it reads LYSLMVLIILTTLVGNLIVIV. Over 47 to 59 the chain is Cytoplasmic; that stretch reads SISHFKELHTPTN. Residues 60 to 80 traverse the membrane as a helical segment; sequence WLIHSMATVDFLPGCLVMPYS. The Extracellular segment spans residues 81–98; that stretch reads MVRSAEHCWYFGEVFCKI. The helical transmembrane segment at 99–119 threads the bilayer; the sequence is HTSTDIMLSSASIFHLSFISI. D103 serves as a coordination point for 2-phenylethylamine. The Cytoplasmic segment spans residues 120–136; it reads DRYYAVCDPLRYKAKIN. A helical transmembrane segment spans residues 137 to 157; it reads ILVICVMIFISWSVPAVFAFG. Topologically, residues 158–188 are extracellular; it reads MIFLELNFKGAEEIYYKHVHCRGGCSVFFSK. The helical transmembrane segment at 189–209 threads the bilayer; sequence ISGVLTFMTSFYIPGSIMLCV. The Cytoplasmic segment spans residues 210–252; that stretch reads YYRIYLIAKEQARLINDANQKLQIGLEMKNGISQSKERKAVKT. Residues 253–273 traverse the membrane as a helical segment; that stretch reads LGIVMGVFLICWCPFFICTVM. Topologically, residues 274–287 are extracellular; it reads DPFLHYIIPPTLND. Residues 288–308 form a helical membrane-spanning segment; sequence VLIWFGYLNSTFNPMVYAFFY. Residues 309-339 are Cytoplasmic-facing; that stretch reads PWFRKALKMMLFGKIFQKDSSRCKLFLELSS.

This sequence belongs to the G-protein coupled receptor 1 family.

Its subcellular location is the endomembrane system. The protein localises to the endoplasmic reticulum membrane. The protein resides in the cell membrane. Functionally, intracellular G-protein coupled receptor for trace amines, which recognizes endogenous amine-containing metabolites such as beta-phenylethylamine (beta-PEA), 3-iodothyronamine (T1AM), isoamylamine (IAA), cadaverine (CAD), cyclohexylamine (CHA), p-tyramine (p-TYR), trimethylamine (TMA), octopamine and tryptamine. Also functions as a receptor for various drugs and psychoactive substances, such as amphetamine and methamphetamine. Unresponsive to classical biogenic amines, such as epinephrine and histamine and only partially activated by dopamine and serotonin. Expressed in both the central and peripheral nervous system: TAAR1 activation regulates the activity of several neurotransmitter signaling pathways by (1) decreasing the basal firing rates of the neurons involved and by (2) lowering the sensitivity of receptors to neurotransmitters. Ligand binding causes a conformation change that triggers signaling via guanine nucleotide-binding proteins (G proteins) and modulates the activity of downstream effectors. TAAR1 is coupled with different G(i)/G(o)-, G(s)- or G(q)/G(11) classes of G alpha proteins depending on the ligand. CAD-binding is coupled to G(i)/G(o) G alpha proteins and mediates inhibition of adenylate cyclase activity. T1AM- or beta-PEA-binding is coupled to G(s) G alpha proteins and mediates activation of adenylate cyclase activity. CHA- or IAA-binding is coupled to G(q)/G(11) G alpha proteins and activates phospholipase C-beta, releasing diacylglycerol (DAG) and inositol 1,4,5-trisphosphate (IP3) second messengers. TMA-binding is coupled with all three G(i)/G(o)-, G(s)- or G(q)/G(11) G alpha protein subtypes. This Pan troglodytes (Chimpanzee) protein is Trace amine-associated receptor 1 (TAAR1).